Reading from the N-terminus, the 219-residue chain is Ropporin-1-like protein (219 aa).

One can recognise an RIIa domain in the interval 17-54 (PELPDILKQFTKAAIRTQPHDLLQWSAAYFDSLSKGEP).

This sequence belongs to the ropporin family. In terms of assembly, component of axonemal radial spoke complexes.

The protein localises to the cell projection. It is found in the cilium. It localises to the flagellum. In terms of biological role, functions as part of axonemal radial spoke complexes that play an important part in the motility of sperm and cilia. Important for male fertility. Involved in fibrous sheath integrity and sperm motility, plays a role in PKA-dependent signaling processes required for spermatozoa capacitation. This is Ropporin-1-like protein (ropn1l) from Xenopus laevis (African clawed frog).